Consider the following 4699-residue polypeptide: Fat-like cadherin-related tumor suppressor homolog (4699 aa).

The first 38 residues, 1–38, serve as a signal peptide directing secretion; sequence MFTMKIKKYVTPVKRKAFTILQWISLLCSLWLIPTVQS. The Extracellular portion of the chain corresponds to 39 to 4285; that stretch reads KADEKHTATL…KNFSIEHISG (4247 aa). Cadherin domains follow at residues 63–183, 184–291, 288–400, 401–507, 508–613, 614–716, 773–877, 878–980, 981–1088, 1089–1198, 1194–1299, 1300–1405, 1408–1506, 1507–1612, 1613–1717, 1718–1815, 1816–1932, 1933–2033, 2034–2140, 2141–2241, 2242–2341, 2342–2449, 2450–2551, 2552–2654, 2655–2763, 2764–2860, 2861–2967, 2968–3072, 3068–3169, 3170–3273, 3274–3378, 3379–3483, 3484–3588, and 3589–3696; these read SHSV…SPLF, YPTQ…APEI, APEI…IPIF, TQEI…DPIF, ENVN…RPQF, ERVN…SSIL, VNFP…RPVI, QKTL…APVF, GVQE…APEF, DDFV…KPVY, DKPV…SPEF, DQRV…APLI, KTSE…PPQF, AKDV…HPEF, TAKI…PPKF, PTNN…IPYF, VQNE…PPVF, NERE…NFAF, QRES…CPLF, VNMP…MPVF, EKQF…YPEI, ESDI…APCF, VEPS…SPLF, DQST…VPYF, LLKE…IPTF, EKSS…YPKF, DNTF…APVF, KLPI…KPRY, LKPR…MPIF, SMAQ…PPEF, SMRQ…SPTF, LQNL…APIF, SSSN…PPIV, and TPLE…VIRF. N-linked (GlcNAc...) asparagine glycans are attached at residues Asn68 and Asn159. N-linked (GlcNAc...) asparagine glycosylation is present at Asn367. Residues Asn782, Asn846, and Asn926 are each glycosylated (N-linked (GlcNAc...) asparagine). N-linked (GlcNAc...) asparagine glycans are attached at residues Asn1109, Asn1201, Asn1315, Asn1442, Asn1476, and Asn1514. 19 cysteine pairs are disulfide-bonded: Cys3807–Cys3819, Cys3814–Cys3851, Cys3853–Cys3862, Cys3869–Cys3880, Cys3874–Cys3891, Cys3893–Cys3902, Cys4071–Cys4105, Cys4117–Cys4128, Cys4122–Cys4138, Cys4140–Cys4149, Cys4156–Cys4167, Cys4161–Cys4177, Cys4179–Cys4188, Cys4194–Cys4205, Cys4199–Cys4214, Cys4216–Cys4224, Cys4231–Cys4242, Cys4236–Cys4251, and Cys4253–Cys4262. Positions 3865–3903 constitute an EGF-like 1 domain; sequence TVNACSTDPCSPQRICMPSGSALGYQCVCPKGFSGTYCE. Residues 3921–4105 enclose the Laminin G-like domain; sequence AVSFGGKSYA…KRFTNVEFKC (185 aa). 4 EGF-like domains span residues 4113–4150, 4152–4189, 4190–4225, and 4227–4263; these read RLGI…KHCE, DLDP…KRCE, YGKF…PTCE, and DVDE…ASCG. A helical membrane pass occupies residues 4286-4306; it reads IISGVAVVLVIISCVLCCVVL. Residues 4307-4699 are Cytoplasmic-facing; sequence KRSSSSKRRN…EFLPQQQTNN (393 aa).

As to expression, localizes where basal actin filaments terminate.

The protein resides in the cell membrane. Functionally, required for the planar polarity of actin filament orientation at the basal side of ovarian follicle cells. Required for proper egg chamber shape and elongation of the egg chamber during oogenesis. Required for the correct planar polarization of Rab10 within the basal follicle cell epithelium and is therefore indirectly involved in the Rab10-dependent remodeling of the basal membrane during egg chamber elongation. This chain is Fat-like cadherin-related tumor suppressor homolog (kug), found in Drosophila melanogaster (Fruit fly).